The primary structure comprises 493 residues: Voltage-gated potassium channel regulatory subunit KCNF1 (493 aa).

Residues 1–183 (MDASAEQSLP…KPESSCPARV (183 aa)) lie on the Cytoplasmic side of the membrane. A helical transmembrane segment spans residues 184 to 204 (VAVLSFLLILVSSVVMCMGTI). The Extracellular segment spans residues 205-223 (PELQVVDSEGNRVEHPTLE). A helical transmembrane segment spans residues 224 to 244 (NVETACIGWFTLEYLLRLFSS). The Cytoplasmic segment spans residues 245–249 (PNKLH). The helical transmembrane segment at 250–270 (FALSFMNIVDVLAILPFYVSL) threads the bilayer. At 271-289 (TLTHLGARMMELTNVQQAV) the chain is on the extracellular side. Residues 290-310 (QALRIMRIARIFKLARHSSGL) form a helical; Voltage-sensor membrane-spanning segment. Residues 311 to 324 (QTLTYALKRSFKEL) lie on the Cytoplasmic side of the membrane. Residues 325 to 345 (GLLLMYLAVGIFVFSALGYTM) traverse the membrane as a helical segment. Topologically, residues 346–357 (EQSHPETLFKSI) are extracellular. Residues 358-378 (PQSFWWAIITMTTVGYGDIYP) constitute an intramembrane region (pore-forming). The Selectivity filter signature appears at 370–375 (TVGYGD). Residues 379-385 (KTTLGKL) lie on the Extracellular side of the membrane. A helical membrane pass occupies residues 386–406 (NAAISFLCGVIAIALPIHPII). Over 407–493 (NNFVRYYNKQ…HHRTRLQSCK (87 aa)) the chain is Cytoplasmic. The disordered stretch occupies residues 433–468 (NSSSAESKPGGSRSDLDTLPPEPAAREGPSWGSRLK).

It belongs to the potassium channel family. F (TC 1.A.1.2) subfamily. Kv5.1/KCNF1 sub-subfamily. Heterotetramer with KCNB1 or KCNB2. In terms of tissue distribution, expressed in brain namely in the piriform cortex, olfactory tubercle, and medial habenular nucleus. Also expressed in the medial amygdaloid nuclei and the lateral amygdaloid area.

The protein localises to the cell membrane. Its function is as follows. Regulatory alpha-subunit of the voltage-gated potassium (Kv) channel which, when coassembled with KCNB1 or KCNB2, can modulate their expression and their gating kinetics by acting on deactivation upon repolarization and inactivation during maintained depolarization. Accelerates inactivation but has relatively little effect on deactivation. Coexpression with KCNB1 or KCNB2 markedly slows inactivation. Each modulatory subunit has its own specific properties of regulation, and can lead to extensive inhibitions, to large changes in kinetics, and/or to large shifts in the voltage dependencies of the inactivation process. The gating kinetics depends on the nature and stoichiometry of the associated regulatory sunbunit. Fails to produce a potassium current when expressed alone. This Rattus norvegicus (Rat) protein is Voltage-gated potassium channel regulatory subunit KCNF1.